A 396-amino-acid polypeptide reads, in one-letter code: Phosphoglycerate kinase (396 aa).

Substrate contacts are provided by residues 21–23 (DLN), arginine 36, 59–62 (HFGR), arginine 118, and arginine 151. ATP-binding positions include lysine 201, glutamate 323, and 353-356 (GGDT).

Belongs to the phosphoglycerate kinase family. In terms of assembly, monomer.

It is found in the cytoplasm. The catalysed reaction is (2R)-3-phosphoglycerate + ATP = (2R)-3-phospho-glyceroyl phosphate + ADP. It participates in carbohydrate degradation; glycolysis; pyruvate from D-glyceraldehyde 3-phosphate: step 2/5. The sequence is that of Phosphoglycerate kinase from Brucella abortus biovar 1 (strain 9-941).